We begin with the raw amino-acid sequence, 314 residues long: tRNA-cytidine(32) 2-sulfurtransferase (314 aa).

Positions 58–63 (SGGKDS) match the PP-loop motif motif. [4Fe-4S] cluster is bound by residues C133, C136, and C224.

Belongs to the TtcA family. As to quaternary structure, homodimer. Requires Mg(2+) as cofactor. [4Fe-4S] cluster serves as cofactor.

The protein localises to the cytoplasm. It carries out the reaction cytidine(32) in tRNA + S-sulfanyl-L-cysteinyl-[cysteine desulfurase] + AH2 + ATP = 2-thiocytidine(32) in tRNA + L-cysteinyl-[cysteine desulfurase] + A + AMP + diphosphate + H(+). It participates in tRNA modification. Catalyzes the ATP-dependent 2-thiolation of cytidine in position 32 of tRNA, to form 2-thiocytidine (s(2)C32). The sulfur atoms are provided by the cysteine/cysteine desulfurase (IscS) system. The sequence is that of tRNA-cytidine(32) 2-sulfurtransferase from Polaromonas naphthalenivorans (strain CJ2).